Reading from the N-terminus, the 334-residue chain is Holliday junction branch migration complex subunit RuvB (334 aa).

The tract at residues 4–184 (ADRLISAGVI…FGIVQRLEFY (181 aa)) is large ATPase domain (RuvB-L). ATP is bound by residues Ile23, Arg24, Gly65, Lys68, Thr69, Thr70, 131 to 133 (EDY), Arg174, Tyr184, and Arg221. Thr69 provides a ligand contact to Mg(2+). The tract at residues 185–255 (QVADLEHIVS…VAMKALDMLN (71 aa)) is small ATPAse domain (RuvB-S). Positions 258 to 334 (AEGFDFMDRK…YKHFGITREE (77 aa)) are head domain (RuvB-H). 3 residues coordinate DNA: Arg294, Arg313, and Arg318.

This sequence belongs to the RuvB family. Homohexamer. Forms an RuvA(8)-RuvB(12)-Holliday junction (HJ) complex. HJ DNA is sandwiched between 2 RuvA tetramers; dsDNA enters through RuvA and exits via RuvB. An RuvB hexamer assembles on each DNA strand where it exits the tetramer. Each RuvB hexamer is contacted by two RuvA subunits (via domain III) on 2 adjacent RuvB subunits; this complex drives branch migration. In the full resolvosome a probable DNA-RuvA(4)-RuvB(12)-RuvC(2) complex forms which resolves the HJ.

It is found in the cytoplasm. The enzyme catalyses ATP + H2O = ADP + phosphate + H(+). In terms of biological role, the RuvA-RuvB-RuvC complex processes Holliday junction (HJ) DNA during genetic recombination and DNA repair, while the RuvA-RuvB complex plays an important role in the rescue of blocked DNA replication forks via replication fork reversal (RFR). RuvA specifically binds to HJ cruciform DNA, conferring on it an open structure. The RuvB hexamer acts as an ATP-dependent pump, pulling dsDNA into and through the RuvAB complex. RuvB forms 2 homohexamers on either side of HJ DNA bound by 1 or 2 RuvA tetramers; 4 subunits per hexamer contact DNA at a time. Coordinated motions by a converter formed by DNA-disengaged RuvB subunits stimulates ATP hydrolysis and nucleotide exchange. Immobilization of the converter enables RuvB to convert the ATP-contained energy into a lever motion, pulling 2 nucleotides of DNA out of the RuvA tetramer per ATP hydrolyzed, thus driving DNA branch migration. The RuvB motors rotate together with the DNA substrate, which together with the progressing nucleotide cycle form the mechanistic basis for DNA recombination by continuous HJ branch migration. Branch migration allows RuvC to scan DNA until it finds its consensus sequence, where it cleaves and resolves cruciform DNA. This Yersinia enterocolitica serotype O:8 / biotype 1B (strain NCTC 13174 / 8081) protein is Holliday junction branch migration complex subunit RuvB.